Here is a 547-residue protein sequence, read N- to C-terminus: Glucose-6-phosphate isomerase (547 aa).

Catalysis depends on E353, which acts as the Proton donor. Catalysis depends on residues H384 and K512.

Belongs to the GPI family.

It is found in the cytoplasm. It carries out the reaction alpha-D-glucose 6-phosphate = beta-D-fructose 6-phosphate. It functions in the pathway carbohydrate biosynthesis; gluconeogenesis. It participates in carbohydrate degradation; glycolysis; D-glyceraldehyde 3-phosphate and glycerone phosphate from D-glucose: step 2/4. Catalyzes the reversible isomerization of glucose-6-phosphate to fructose-6-phosphate. The protein is Glucose-6-phosphate isomerase of Campylobacter jejuni subsp. doylei (strain ATCC BAA-1458 / RM4099 / 269.97).